The sequence spans 669 residues: DNA ligase (669 aa).

NAD(+)-binding positions include 31–35 (DAEYD), 80–81 (SL), and E112. K114 acts as the N6-AMP-lysine intermediate in catalysis. R135, E172, K289, and K313 together coordinate NAD(+). Residues C407, C410, C425, and C431 each coordinate Zn(2+). The BRCT domain maps to 591–669 (SVPQPLADKV…EEQLIEILNN (79 aa)).

It belongs to the NAD-dependent DNA ligase family. LigA subfamily. Mg(2+) is required as a cofactor. Requires Mn(2+) as cofactor.

The enzyme catalyses NAD(+) + (deoxyribonucleotide)n-3'-hydroxyl + 5'-phospho-(deoxyribonucleotide)m = (deoxyribonucleotide)n+m + AMP + beta-nicotinamide D-nucleotide.. Its function is as follows. DNA ligase that catalyzes the formation of phosphodiester linkages between 5'-phosphoryl and 3'-hydroxyl groups in double-stranded DNA using NAD as a coenzyme and as the energy source for the reaction. It is essential for DNA replication and repair of damaged DNA. In Aliivibrio salmonicida (strain LFI1238) (Vibrio salmonicida (strain LFI1238)), this protein is DNA ligase.